We begin with the raw amino-acid sequence, 76 residues long: Exodeoxyribonuclease 7 small subunit (76 aa).

Belongs to the XseB family. Heterooligomer composed of large and small subunits.

It localises to the cytoplasm. It carries out the reaction Exonucleolytic cleavage in either 5'- to 3'- or 3'- to 5'-direction to yield nucleoside 5'-phosphates.. Functionally, bidirectionally degrades single-stranded DNA into large acid-insoluble oligonucleotides, which are then degraded further into small acid-soluble oligonucleotides. This chain is Exodeoxyribonuclease 7 small subunit, found in Geobacter sulfurreducens (strain ATCC 51573 / DSM 12127 / PCA).